A 938-amino-acid polypeptide reads, in one-letter code: Isoleucine--tRNA ligase (938 aa).

Residues 58 to 68 (PYANGSIHIGH) carry the 'HIGH' region motif. Position 561 (Glu-561) interacts with L-isoleucyl-5'-AMP. The short motif at 602-606 (KMSKS) is the 'KMSKS' region element. Lys-605 is a binding site for ATP. Zn(2+) contacts are provided by Cys-901, Cys-904, Cys-921, and Cys-924.

The protein belongs to the class-I aminoacyl-tRNA synthetase family. IleS type 1 subfamily. In terms of assembly, monomer. Zn(2+) serves as cofactor.

It localises to the cytoplasm. It carries out the reaction tRNA(Ile) + L-isoleucine + ATP = L-isoleucyl-tRNA(Ile) + AMP + diphosphate. Catalyzes the attachment of isoleucine to tRNA(Ile). As IleRS can inadvertently accommodate and process structurally similar amino acids such as valine, to avoid such errors it has two additional distinct tRNA(Ile)-dependent editing activities. One activity is designated as 'pretransfer' editing and involves the hydrolysis of activated Val-AMP. The other activity is designated 'posttransfer' editing and involves deacylation of mischarged Val-tRNA(Ile). The polypeptide is Isoleucine--tRNA ligase (Baumannia cicadellinicola subsp. Homalodisca coagulata).